We begin with the raw amino-acid sequence, 93 residues long: Sec-independent protein translocase protein TatA (93 aa).

A helical membrane pass occupies residues 1-21 (MGAMSPWHWAIVALVVVILFG). A disordered region spans residues 44 to 93 (KEMQNDNSTPAPTAQQSAPAELPVADTTTAPVTPPAPVQPQPQHTEPKSA). The span at 51-74 (STPAPTAQQSAPAELPVADTTTAP) shows a compositional bias: low complexity.

It belongs to the TatA/E family. As to quaternary structure, the Tat system comprises two distinct complexes: a TatABC complex, containing multiple copies of TatA, TatB and TatC subunits, and a separate TatA complex, containing only TatA subunits. Substrates initially bind to the TatABC complex, which probably triggers association of the separate TatA complex to form the active translocon.

The protein localises to the cell membrane. Functionally, part of the twin-arginine translocation (Tat) system that transports large folded proteins containing a characteristic twin-arginine motif in their signal peptide across membranes. TatA could form the protein-conducting channel of the Tat system. This chain is Sec-independent protein translocase protein TatA, found in Rhodococcus opacus (strain B4).